We begin with the raw amino-acid sequence, 234 residues long: AA9 family lytic polysaccharide monooxygenase D (234 aa).

An N-terminal signal peptide occupies residues 1 to 18 (MRIEKLLNAALLAGAVSA). Cu(2+)-binding residues include H19 and H95. C57 and C182 are oxidised to a cystine. H168 and Q177 together coordinate O2. Y179 is a binding site for Cu(2+).

The protein belongs to the polysaccharide monooxygenase AA9 family. The cofactor is Cu(2+).

The protein localises to the secreted. The catalysed reaction is [(1-&gt;4)-beta-D-glucosyl]n+m + reduced acceptor + O2 = 4-dehydro-beta-D-glucosyl-[(1-&gt;4)-beta-D-glucosyl]n-1 + [(1-&gt;4)-beta-D-glucosyl]m + acceptor + H2O.. In terms of biological role, lytic polysaccharide monooxygenase (LPMO) that depolymerizes crystalline and amorphous polysaccharides via the oxidation of scissile alpha- or beta-(1-4)-glycosidic bonds, yielding C1 or C4 oxidation products. Catalysis by LPMOs requires the reduction of the active-site copper from Cu(II) to Cu(I) by a reducing agent and H(2)O(2) or O(2) as a cosubstrate. In Malbranchea cinnamomea (Thermophilic fungus), this protein is AA9 family lytic polysaccharide monooxygenase D.